The primary structure comprises 311 residues: MEMMVHGRRDEQYGGLRLGLGLGLSLGVAGGAADDEQPPPRRGAAPPPQQQLCGWNGGGLFSSSSSDHRGRSAMMACHDVIEMPFLRGIDVNRAPAAETTTTTARGPSCSEEDEEPGASSPNSTLSSLSGKRGAPSAATAAAAAASDDEDSGGGSRKKLRLSKDQAAVLEDTFKEHNTLNPKQKAALARQLNLKPRQVEVWFQNRRARTKLKQTEVDCELLKRCCETLTDENRRLHRELQELRALKLATAAAAPHHLYGARVPPPTTLTMCPSCERVASAATTTRNNSGAAPARPVPTRPWPPAAAQRSSA.

Disordered regions lie at residues 29 to 69 (AGGA…SDHR) and 97 to 160 (AETT…KKLR). Residues 119–145 (SSPNSTLSSLSGKRGAPSAATAAAAAA) show a composition bias toward low complexity. Positions 154–213 (GSRKKLRLSKDQAAVLEDTFKEHNTLNPKQKAALARQLNLKPRQVEVWFQNRRARTKLKQ) form a DNA-binding region, homeobox. Positions 212–256 (KQTEVDCELLKRCCETLTDENRRLHRELQELRALKLATAAAAPHH) are leucine-zipper. The interval 279 to 311 (SAATTTRNNSGAAPARPVPTRPWPPAAAQRSSA) is disordered. Residues 280-289 (AATTTRNNSG) show a composition bias toward polar residues. Pro residues predominate over residues 294–303 (RPVPTRPWPP).

It belongs to the HD-ZIP homeobox family. Class II subfamily. Homodimer. May form a heterodimer with HOX2, HOX3 or HOX7. As to expression, expressed in root provascular and vascular cylinder, provascular and vascular strands of leaves, provascular and vascular strands of the whole panicle, in mature embryo provascular bundles of scutellum and embryonic axis and provascular and vascular strands of young immature spikelet organs. Expressed in differentiating and differentiated xylem and phloem elements, and in outer and inner bundle sheath cells of all vascular bundles. Expressed in auricles, ligules, culm, guard cells brac hairs and pollen.

It localises to the nucleus. In terms of biological role, probable transcription repressor involved leaf development. Binds to the DNA sequence 5'-CAAT[GC]ATTG-3'. May act as a regulatory switch to specify provascular cell fate. The chain is Homeobox-leucine zipper protein HOX1 (HOX1) from Oryza sativa subsp. japonica (Rice).